A 119-amino-acid chain; its full sequence is Small ribosomal subunit protein eS25 (119 aa).

Positions 1-42 (MPPKKDTKASAKQPQKTQKKKEGSGGGKAKKKKWSKGKVRDK) are disordered. A compositionally biased stretch (basic residues) spans 28-37 (KAKKKKWSKG).

The protein belongs to the eukaryotic ribosomal protein eS25 family.

This is Small ribosomal subunit protein eS25 (RpS25) from Spodoptera frugiperda (Fall armyworm).